A 509-amino-acid polypeptide reads, in one-letter code: Dihydrolipoyl dehydrogenase, mitochondrial (509 aa).

The transit peptide at methionine 1 to tyrosine 35 directs the protein to the mitochondrion. Lysine 66 carries the post-translational modification N6-acetyllysine; alternate. Residue lysine 66 is modified to N6-succinyllysine; alternate. FAD-binding positions include glutamate 71–cysteine 80 and lysine 89. The cysteines at positions 80 and 85 are disulfide-linked. N6-acetyllysine; alternate is present on residues lysine 104, lysine 122, lysine 132, and lysine 143. Residues lysine 104, lysine 122, lysine 132, and lysine 143 each carry the N6-succinyllysine; alternate modification. Glycine 154 contributes to the FAD binding site. N6-succinyllysine occurs at positions 159 and 166. Threonine 183 to serine 185 lines the FAD pocket. NAD(+) contacts are provided by residues glycine 220–glutamate 227 and glutamate 243. 2 positions are modified to N6-succinyllysine: lysine 273 and lysine 277. NAD(+) is bound at residue valine 278. Residues serine 285 and serine 297 each carry the phosphoserine modification. Residue glycine 314 participates in NAD(+) binding. Lysine 346 is modified (N6-acetyllysine). Residues aspartate 355 and methionine 361–histidine 364 contribute to the FAD site. At lysine 410 the chain carries N6-acetyllysine; alternate. Residue lysine 410 is modified to N6-succinyllysine; alternate. N6-acetyllysine is present on residues lysine 417 and lysine 420. The residue at position 430 (lysine 430) is an N6-succinyllysine. The active-site Proton acceptor is the histidine 487. A Phosphoserine modification is found at serine 502. Lysine 505 is subject to N6-acetyllysine; alternate. An N6-succinyllysine; alternate modification is found at lysine 505.

Belongs to the class-I pyridine nucleotide-disulfide oxidoreductase family. Homodimer. Part of the multimeric pyruvate dehydrogenase complex that contains multiple copies of pyruvate dehydrogenase (subunits PDHA (PDHA1 or PDHA2) and PDHB, E1), dihydrolipoamide acetyltransferase (DLAT, E2) and lipoamide dehydrogenase (DLD, E3). These subunits are bound to an inner core composed of about 48 DLAT and 12 PDHX molecules (by non covalent bonds). The 2-oxoglutarate dehydrogenase complex is composed of OGDH (2-oxoglutarate dehydrogenase; E1), DLST (dihydrolipoamide succinyltransferase; E2), DLD (dihydrolipoamide dehydrogenase; E3) and the assembly factor KGD4. It contains multiple copies of the three enzymatic components (E1, E2 and E3). In the nucleus, the 2-oxoglutarate dehydrogenase complex associates with KAT2A. Interacts with PDHX. FAD serves as cofactor. Tyrosine phosphorylated. Expressed in heart (at protein level).

The protein localises to the mitochondrion matrix. It is found in the nucleus. Its subcellular location is the cell projection. It localises to the cilium. The protein resides in the flagellum. The protein localises to the cytoplasmic vesicle. It is found in the secretory vesicle. Its subcellular location is the acrosome. It carries out the reaction N(6)-[(R)-dihydrolipoyl]-L-lysyl-[protein] + NAD(+) = N(6)-[(R)-lipoyl]-L-lysyl-[protein] + NADH + H(+). Functionally, lipoamide dehydrogenase is a component of the glycine cleavage system as well as an E3 component of three alpha-ketoacid dehydrogenase complexes (pyruvate-, alpha-ketoglutarate-, and branched-chain amino acid-dehydrogenase complex). The 2-oxoglutarate dehydrogenase complex is mainly active in the mitochondrion. A fraction of the 2-oxoglutarate dehydrogenase complex also localizes in the nucleus and is required for lysine succinylation of histones: associates with KAT2A on chromatin and provides succinyl-CoA to histone succinyltransferase KAT2A. In monomeric form may have additional moonlighting function as serine protease. Involved in the hyperactivation of spermatazoa during capacitation and in the spermatazoal acrosome reaction. The protein is Dihydrolipoyl dehydrogenase, mitochondrial (DLD) of Sus scrofa (Pig).